The chain runs to 257 residues: Type III pantothenate kinase (257 aa).

Residue 6 to 13 (DCGNTNTV) participates in ATP binding. 107–110 (GPDR) is a substrate binding site. Catalysis depends on Asp109, which acts as the Proton acceptor. Asp129 contributes to the K(+) binding site. Thr132 is an ATP binding site. Substrate is bound at residue Thr184.

This sequence belongs to the type III pantothenate kinase family. As to quaternary structure, homodimer. NH4(+) is required as a cofactor. K(+) serves as cofactor.

The protein resides in the cytoplasm. It carries out the reaction (R)-pantothenate + ATP = (R)-4'-phosphopantothenate + ADP + H(+). Its pathway is cofactor biosynthesis; coenzyme A biosynthesis; CoA from (R)-pantothenate: step 1/5. Functionally, catalyzes the phosphorylation of pantothenate (Pan), the first step in CoA biosynthesis. This is Type III pantothenate kinase from Cereibacter sphaeroides (strain ATCC 17029 / ATH 2.4.9) (Rhodobacter sphaeroides).